A 145-amino-acid polypeptide reads, in one-letter code: Deoxyuridine 5'-triphosphate nucleotidohydrolase (145 aa).

Residues 63-65 (RSG), Asn76, and 80-82 (TID) each bind substrate.

The protein belongs to the dUTPase family. It depends on Mg(2+) as a cofactor.

The catalysed reaction is dUTP + H2O = dUMP + diphosphate + H(+). Its pathway is pyrimidine metabolism; dUMP biosynthesis; dUMP from dCTP (dUTP route): step 2/2. Functionally, this enzyme is involved in nucleotide metabolism: it produces dUMP, the immediate precursor of thymidine nucleotides and it decreases the intracellular concentration of dUTP so that uracil cannot be incorporated into DNA. This chain is Deoxyuridine 5'-triphosphate nucleotidohydrolase, found in Chlamydia pneumoniae (Chlamydophila pneumoniae).